The sequence spans 153 residues: Large ribosomal subunit protein bL27m (153 aa).

Residues 1 to 37 constitute a mitochondrion transit peptide; the sequence is MINQGLFIRVNNFQLLKASLAYKKASNILTFPPIRTS. A disordered region spans residues 34–57; that stretch reads IRTSTKHGGGSSKNTGDSAGRRLG.

Belongs to the bacterial ribosomal protein bL27 family. Component of the mitochondrial large ribosomal subunit (mt-LSU). Mature yeast 74S mitochondrial ribosomes consist of a small (37S) and a large (54S) subunit. The 37S small subunit contains a 15S ribosomal RNA (15S mt-rRNA) and at least 32 different proteins. The 54S large subunit contains a 21S rRNA (21S mt-rRNA) and at least 45 different proteins.

It localises to the mitochondrion. Functionally, component of the mitochondrial ribosome (mitoribosome), a dedicated translation machinery responsible for the synthesis of mitochondrial genome-encoded proteins, including at least some of the essential transmembrane subunits of the mitochondrial respiratory chain. The mitoribosomes are attached to the mitochondrial inner membrane and translation products are cotranslationally integrated into the membrane. The polypeptide is Large ribosomal subunit protein bL27m (mrp7) (Schizosaccharomyces pombe (strain 972 / ATCC 24843) (Fission yeast)).